A 287-amino-acid chain; its full sequence is Hydroxysteroid 11-beta-dehydrogenase 1-like protein (287 aa).

The signal sequence occupies residues 1–15 (MKVLLLTGLGALFFA). NADP(+) contacts are provided by residues 36–62 (GASA…TAHT), 87–88 (DM), and 114–116 (NHI). Ser165 lines the substrate pocket. Catalysis depends on Tyr178, which acts as the Proton acceptor. NADP(+)-binding positions include 178-182 (YSAAK) and 211-217 (GLRDRAS).

This sequence belongs to the short-chain dehydrogenases/reductases (SDR) family.

The protein resides in the secreted. The catalysed reaction is cortisone + NADPH + H(+) = cortisol + NADP(+). Unidirectional NADP(+)-dependent cortisol dehydrogenase (in vitro). The chain is Hydroxysteroid 11-beta-dehydrogenase 1-like protein (HSD11B1L) from Macaca fascicularis (Crab-eating macaque).